Here is a 431-residue protein sequence, read N- to C-terminus: Beta-lactamase hydrolase-like protein (431 aa).

Zn(2+)-binding residues include His212, His214, and His286. Position 309 (Asp309) interacts with substrate.

The protein belongs to the metallo-beta-lactamase superfamily. The cofactor is Zn(2+).

Functionally, could play a role in cell adherence or biofilm development. This is Beta-lactamase hydrolase-like protein from Xylella fastidiosa (strain Temecula1 / ATCC 700964).